Reading from the N-terminus, the 639-residue chain is Threonine--tRNA ligase (639 aa).

One can recognise a TGS domain in the interval 1–61; that stretch reads MIHITLPDGS…TADCRLSIIT (61 aa). Residues 242–533 are catalytic; that stretch reads DHRKLGRELD…LLEQHAGALP (292 aa). Cys-333, His-384, and His-510 together coordinate Zn(2+).

It belongs to the class-II aminoacyl-tRNA synthetase family. Homodimer. The cofactor is Zn(2+).

Its subcellular location is the cytoplasm. The enzyme catalyses tRNA(Thr) + L-threonine + ATP = L-threonyl-tRNA(Thr) + AMP + diphosphate + H(+). Functionally, catalyzes the attachment of threonine to tRNA(Thr) in a two-step reaction: L-threonine is first activated by ATP to form Thr-AMP and then transferred to the acceptor end of tRNA(Thr). Also edits incorrectly charged L-seryl-tRNA(Thr). This Verminephrobacter eiseniae (strain EF01-2) protein is Threonine--tRNA ligase.